We begin with the raw amino-acid sequence, 366 residues long: Septin-1 (366 aa).

The 274-residue stretch at 22–295 (KGFDFTLMVA…EGYRARCLQS (274 aa)) folds into the Septin-type G domain. The tract at residues 32 to 39 (GESGLGKS) is G1 motif. Residues 32–39 (GESGLGKS), Thr66, Gly92, and 171–179 (KADALLPRE) each bind GTP. A G3 motif region spans residues 89–92 (DTPG). The interval 170–173 (GKAD) is G4 motif. Ser206 bears the Phosphoserine mark. Positions 229 and 244 each coordinate GTP. Ser247 is subject to Phosphoserine; by AURKB. A Phosphothreonine modification is found at Thr250. 2 positions are modified to phosphoserine; by AURKB: Ser306 and Ser314. The interval 347–366 (EKMQAQMQQSQAQGEQSDVL) is disordered. The segment covering 349–366 (MQAQMQQSQAQGEQSDVL) has biased composition (low complexity).

The protein belongs to the TRAFAC class TrmE-Era-EngA-EngB-Septin-like GTPase superfamily. Septin GTPase family. In terms of assembly, septins polymerize into heterooligomeric protein complexes that form filaments, and can associate with cellular membranes, actin filaments and microtubules. GTPase activity is required for filament formation. Interacts with AURKB.

It is found in the cytoplasm. It localises to the cytoskeleton. Its subcellular location is the microtubule organizing center. The protein localises to the centrosome. The protein resides in the midbody. Filament-forming cytoskeletal GTPase. May play a role in cytokinesis (Potential). This chain is Septin-1, found in Rattus norvegicus (Rat).